The following is a 176-amino-acid chain: Ferritin heavy polypeptide-like 17E (176 aa).

Residues 10–159 (QNYDWQCEDA…GYLTNLRQMG (150 aa)) form the Ferritin-like diiron domain. 3 residues coordinate Fe cation: cysteine 27, glutamate 107, and glutamine 141.

The protein belongs to the ferritin family. As to expression, expressed in the testes and spermatogonia.

In Mus musculus (Mouse), this protein is Ferritin heavy polypeptide-like 17E.